The chain runs to 241 residues: MTRDEARAKVIFALDVHEFSDVEQWADMLAPHVGMFKVGKQLFTSCGPAAVRMIQKCGGEVFLDLKYHDIPNTVAMASLEAARMGVKLFNLHALGGYEMMAKTVETLDKEFKGGERGKVLAVTILTSSNEQTLQDVGINIPVPEMVVKLALLARKAGIDGVVASPQEVPLIRKACGKDFLIVTPGVRPAFASSDDQKRIMTPAEAVRTGADYLVIGRPIAAAPKPVEAAEAIIDEIMAVEG.

Residues D15, K37, 64–73 (DLKYHDIPNT), T126, R187, Q196, G216, and R217 each bind substrate. Catalysis depends on K66, which acts as the Proton donor.

Belongs to the OMP decarboxylase family. Type 1 subfamily. Homodimer.

It catalyses the reaction orotidine 5'-phosphate + H(+) = UMP + CO2. Its pathway is pyrimidine metabolism; UMP biosynthesis via de novo pathway; UMP from orotate: step 2/2. Functionally, catalyzes the decarboxylation of orotidine 5'-monophosphate (OMP) to uridine 5'-monophosphate (UMP). The sequence is that of Orotidine 5'-phosphate decarboxylase from Geotalea uraniireducens (strain Rf4) (Geobacter uraniireducens).